The primary structure comprises 273 residues: Putative phosphoenolpyruvate synthase regulatory protein (273 aa).

153-160 (GVSRSGKT) is a binding site for ADP.

This sequence belongs to the pyruvate, phosphate/water dikinase regulatory protein family. PSRP subfamily.

The enzyme catalyses [pyruvate, water dikinase] + ADP = [pyruvate, water dikinase]-phosphate + AMP + H(+). It carries out the reaction [pyruvate, water dikinase]-phosphate + phosphate + H(+) = [pyruvate, water dikinase] + diphosphate. In terms of biological role, bifunctional serine/threonine kinase and phosphorylase involved in the regulation of the phosphoenolpyruvate synthase (PEPS) by catalyzing its phosphorylation/dephosphorylation. In Leptothrix cholodnii (strain ATCC 51168 / LMG 8142 / SP-6) (Leptothrix discophora (strain SP-6)), this protein is Putative phosphoenolpyruvate synthase regulatory protein.